The following is a 72-amino-acid chain: Potassium channel toxin kappa-KTx 5.1 (72 aa).

A signal peptide spans 1–23; that stretch reads MKLLPLLFVILIVCAILPDEASC. The propeptide occupies 24 to 43; that stretch reads DQSELERKEENFKDESREIV. 2 cysteine pairs are disulfide-bonded: Cys-47–Cys-64 and Cys-51–Cys-60. A Histidine amide modification is found at His-70.

Belongs to the short scorpion toxin superfamily. Potassium channel inhibitor kappa-KTx family. Kappa-KTx 5 subfamily. As to expression, expressed by the venom gland.

It localises to the secreted. Weak blocker of potassium channels Kv1.1/KCNA1 (IC(50)=578.5 nM-9.9 uM) and Kv1.6/KCNA6 (~60% block at 30 uM of toxin). Acts by binding to the pore and occluding it. Has a voltage-dependent mode of action, which can be explained by a high content of basic residues causing repulsions at higher membrane voltages. Shows a weak interaction with muscle-type nicotinic acetylcholine receptors (nAChR), since it inhibits alpha-bungarotoxin binding to muscle-type nAChR from T.californica (IC(50)=1.4 uM). This suggests it probably weakly inhibits muscle nAChR. The mode of binding to potassium channels of this toxin differs from its homologs (including HefuTx1), since it lacks the key aromatic residue of the functional dyad. In contrast, its functionally important site is composed of a number of basic residues. In Heterometrus laoticus (Thai giant scorpion), this protein is Potassium channel toxin kappa-KTx 5.1.